The primary structure comprises 471 residues: Eremophilane O-acetyltransferase ORF8 (471 aa).

Belongs to the fumigaclavine B O-acetyltransferase family. Monomer.

It functions in the pathway sesquiterpene biosynthesis. O-acetyltransferase; part of the gene cluster that mediates the biosynthesis of PR-toxin, a bicyclic sesquiterpene belonging to the eremophilane class and acting as a mycotoxin. The first step of the pathway is catalyzed by the aristolochene synthase which performs the cyclization of trans,trans-farnesyl diphosphate (FPP) to the bicyclic sesquiterpene aristolochene. Following the formation of aristolochene, the non-oxygenated aristolochene is converted to the trioxygenated intermediate eremofortin B, via 7-epi-neopetasone. This conversion appears to involve three enzymes, a hydroxysterol oxidase-like enzyme, the quinone-oxidase prx3 that forms the quinone-type-structure in the bicyclic nucleus of aristolochene with the C8-oxo group and the C-3 hydroxyl group, and the P450 monooxygenase ORF6 that introduces the epoxide at the double bond between carbons 1 and 2. No monoxy or dioxy-intermediates have been reported to be released to the broth, so these three early oxidative reactions may be coupled together. Eremofortin B is further oxidized by another P450 monooxygenase, that introduces a second epoxide between carbons 7 and 11 prior to acetylation to eremofortin A by the acetyltransferase ORF8. The second epoxidation may be performed by a second P450 monooxygenase. After the acetylation step, eremofortin A is converted to eremofortin C and then to PR-toxin. First the conversion of eremofortin A to eremofortin C proceeds by oxidation of the side chain of the molecule at C-12 and is catalyzed by the short-chain oxidoreductase prx1. The cytochrome P450 monooxygenase ORF6 is probably also involved in this step. The primary alcohol formed at C-12 is finally oxidized by the short-chain alcohol dehydrogenase prx4 that forms PR-toxin. This chain is Eremophilane O-acetyltransferase ORF8, found in Penicillium roqueforti (strain FM164).